A 366-amino-acid chain; its full sequence is MTAPLELEQIRKAPKALLHDHLDGGLRPSTVLDIAGQTGYDGLPATDVEELATWFRTRSHSGSLERYLEPFSHTVAVMQTPEALHRVAYECVEDLAEDSVVYAEIRFAPELHINRGMSFDEIVDAVLAGFADGEKACAAAGRPIVVRLLVTAMRHAAVSREIAELAIRWRDKGVVGFDIAGAEAGNPPTRHLEAFDYMRDHNARFTIHAGEAFGLPSIHEAIAFCGADRLGHGVRIVDDIDVLADGPDKGKVRLGRLANILRDKRIPLELCPSSNVQTGAVKSIADHPFDLLARTRFRVTVNTDNRLMSDTYMSREMHRLVQAFGYGWSDLERFTINAMKSAFIPFDERLAIIDEVIKPRYAVLIG.

2 residues coordinate Zn(2+): His19 and His21. Residues His21, Asp23, and Gly181 each coordinate substrate. Position 208 (His208) interacts with Zn(2+). The active-site Proton donor is the Glu211. Position 304 (Asp304) interacts with Zn(2+).

The protein belongs to the metallo-dependent hydrolases superfamily. Adenosine and AMP deaminases family. Adenosine deaminase subfamily. Zn(2+) serves as cofactor.

It carries out the reaction adenosine + H2O + H(+) = inosine + NH4(+). The enzyme catalyses 2'-deoxyadenosine + H2O + H(+) = 2'-deoxyinosine + NH4(+). Its function is as follows. Catalyzes the hydrolytic deamination of adenosine and 2-deoxyadenosine. The polypeptide is Adenosine deaminase (Mycobacterium avium (strain 104)).